A 393-amino-acid polypeptide reads, in one-letter code: S-adenosylmethionine synthase (393 aa).

Residue E9 coordinates Mg(2+). H15 lines the ATP pocket. Residue D17 coordinates Mg(2+). E43 lines the K(+) pocket. Residues E56 and Q99 each coordinate L-methionine. ATP-binding positions include 167–169 (DGK), 235–238 (SGRF), D246, 252–253 (RK), A269, K273, and K277. Residue D246 participates in L-methionine binding. An L-methionine-binding site is contributed by K277.

The protein belongs to the AdoMet synthase family. In terms of assembly, homotetramer; dimer of dimers. Requires Mn(2+) as cofactor. Mg(2+) is required as a cofactor. Co(2+) serves as cofactor. It depends on K(+) as a cofactor.

It localises to the cytoplasm. The enzyme catalyses L-methionine + ATP + H2O = S-adenosyl-L-methionine + phosphate + diphosphate. It participates in amino-acid biosynthesis; S-adenosyl-L-methionine biosynthesis; S-adenosyl-L-methionine from L-methionine: step 1/1. With respect to regulation, increased activity in the presence of 25 percent acetonitrile, methanol or dimethylformamide. Functionally, catalyzes the formation of S-adenosylmethionine from methionine and ATP. This is S-adenosylmethionine synthase from Acacia koa (Koa tree).